The chain runs to 383 residues: F-box/kelch-repeat protein At2g22030 (383 aa).

The F-box domain occupies 23 to 71 (SLLFSSLPYDVVLNCLARVSRRYYPNLSCVSKSFQSLVRSPELAHMRSL). Kelch repeat units follow at residues 130 to 175 (KIYF…VVNG), 176 to 220 (KLYV…LMRY), and 269 to 317 (GVCV…GMVD).

The polypeptide is F-box/kelch-repeat protein At2g22030 (Arabidopsis thaliana (Mouse-ear cress)).